The following is a 94-amino-acid chain: Integration host factor subunit beta (94 aa).

It belongs to the bacterial histone-like protein family. Heterodimer of an alpha and a beta chain.

Its function is as follows. This protein is one of the two subunits of integration host factor, a specific DNA-binding protein that functions in genetic recombination as well as in transcriptional and translational control. This is Integration host factor subunit beta from Haemophilus influenzae (strain 86-028NP).